Consider the following 880-residue polypeptide: Alanine--tRNA ligase (880 aa).

Zn(2+) is bound by residues H567, H571, C669, and H673.

It belongs to the class-II aminoacyl-tRNA synthetase family. Requires Zn(2+) as cofactor.

Its subcellular location is the cytoplasm. It catalyses the reaction tRNA(Ala) + L-alanine + ATP = L-alanyl-tRNA(Ala) + AMP + diphosphate. In terms of biological role, catalyzes the attachment of alanine to tRNA(Ala) in a two-step reaction: alanine is first activated by ATP to form Ala-AMP and then transferred to the acceptor end of tRNA(Ala). Also edits incorrectly charged Ser-tRNA(Ala) and Gly-tRNA(Ala) via its editing domain. The chain is Alanine--tRNA ligase from Bacillus cereus (strain ATCC 14579 / DSM 31 / CCUG 7414 / JCM 2152 / NBRC 15305 / NCIMB 9373 / NCTC 2599 / NRRL B-3711).